Here is a 565-residue protein sequence, read N- to C-terminus: MTQSQGQDPRLDTSRTIRAPHGTTLRAKSWLTEAPLRMLMNNLDPDVAEHPHALVVYGGIGRAARNWACFDKIVEVLERLEDDQTLLVQSGKPVGVFPTHKNAPRVLIANSNLVPHWANWEHFNELDKQGLMMYGQMTAGSWIYIGSQGIVQGTYETFVAVAKKHFAGEAKGRWVLTGGLGGMGGAQPLAATMAGFSMIAVECDESRIDYRLRTGYVDKKATTLDEALAIVKESDTPVSVGLLGNAADVFAELVERNITPDIVTDQTSAHDPLNGYLPQGWSMAYAAEMRQQDESAVVKAAKQSMAVQVKAMLALQTRGAATLDYGNNIRQMALEEGVENAFDFPGFVPAYIRPLFCEGIGPFRWAALSGDPEDIYKTDQKVKELIPDNPHLHNWLDMARERIQFQGLPARICWVGLKDRERLGQAFNEMVKNGELKAPIVIGRDHLDSGSVASPNRETEGMMDGSDAVSDWPLLNALLNTAGGATWVSLHHGGGVGMGFSQHSGMVICCDGTEDASARIARVLHNDPATGVMRHADAGYDIAKQCAAQQGLDLPMLNEELSKLK.

NAD(+) contacts are provided by residues 58-59 (GG), Gln-136, 182-184 (GMG), Glu-202, Arg-207, 245-246 (NA), 266-270 (QTSAH), 276-277 (YL), and Tyr-325. Cys-413 is a catalytic residue. An NAD(+)-binding site is contributed by Gly-495.

The protein belongs to the urocanase family. Requires NAD(+) as cofactor.

The protein resides in the cytoplasm. The catalysed reaction is 4-imidazolone-5-propanoate = trans-urocanate + H2O. Its pathway is amino-acid degradation; L-histidine degradation into L-glutamate; N-formimidoyl-L-glutamate from L-histidine: step 2/3. Functionally, catalyzes the conversion of urocanate to 4-imidazolone-5-propionate. In Vibrio vulnificus (strain YJ016), this protein is Urocanate hydratase.